The primary structure comprises 104 residues: Large ribosomal subunit protein bL21 (104 aa).

It belongs to the bacterial ribosomal protein bL21 family. As to quaternary structure, part of the 50S ribosomal subunit. Contacts protein L20.

In terms of biological role, this protein binds to 23S rRNA in the presence of protein L20. This Rhodopirellula baltica (strain DSM 10527 / NCIMB 13988 / SH1) protein is Large ribosomal subunit protein bL21.